The primary structure comprises 185 residues: Probable chorismate pyruvate-lyase 2 (185 aa).

Residues R80, L118, and E170 each coordinate substrate.

Belongs to the UbiC family.

The protein localises to the cytoplasm. The enzyme catalyses chorismate = 4-hydroxybenzoate + pyruvate. It functions in the pathway cofactor biosynthesis; ubiquinone biosynthesis. In terms of biological role, removes the pyruvyl group from chorismate, with concomitant aromatization of the ring, to provide 4-hydroxybenzoate (4HB) for the ubiquinone pathway. In Pseudomonas entomophila (strain L48), this protein is Probable chorismate pyruvate-lyase 2.